We begin with the raw amino-acid sequence, 420 residues long: UDP-N-acetylglucosamine 1-carboxyvinyltransferase (420 aa).

A phosphoenolpyruvate-binding site is contributed by 22–23 (KN). Position 94 (Arg-94) interacts with UDP-N-acetyl-alpha-D-glucosamine. Cys-118 serves as the catalytic Proton donor. Position 118 is a 2-(S-cysteinyl)pyruvic acid O-phosphothioketal (Cys-118). 2 residues coordinate UDP-N-acetyl-alpha-D-glucosamine: Asp-307 and Ile-329.

It belongs to the EPSP synthase family. MurA subfamily.

It is found in the cytoplasm. The enzyme catalyses phosphoenolpyruvate + UDP-N-acetyl-alpha-D-glucosamine = UDP-N-acetyl-3-O-(1-carboxyvinyl)-alpha-D-glucosamine + phosphate. It functions in the pathway cell wall biogenesis; peptidoglycan biosynthesis. Its function is as follows. Cell wall formation. Adds enolpyruvyl to UDP-N-acetylglucosamine. The chain is UDP-N-acetylglucosamine 1-carboxyvinyltransferase from Gluconacetobacter diazotrophicus (strain ATCC 49037 / DSM 5601 / CCUG 37298 / CIP 103539 / LMG 7603 / PAl5).